The following is a 465-amino-acid chain: Pre-mRNA-splicing factor URN1 (465 aa).

Residues 1–32 (MRGEWQEFKTPAGKKYYYNKNTKQSRWEKPNL) form the WW domain. 3 disordered regions span residues 28-49 (EKPN…QTER), 144-198 (ERKD…VNQD), and 266-288 (ERSG…DSEV). Residue S150 is modified to Phosphoserine. Residues 160-175 (LQESHTGLVSGYGSSS) are compositionally biased toward polar residues. Residues 176 to 192 (GEEDEEEDEEEDEENEE) are compositionally biased toward acidic residues. The region spanning 212–266 (DIDERNIFFELFDRYKLDKFSTWSLQSKKIENDPDFYKIRDDTVRESLFEEWCGE) is the FF domain. The segment covering 274 to 288 (EESDSEDNSEDDSEV) has biased composition (acidic residues).

As to quaternary structure, component of the precatalytic spliceosomal complex B. Interacts with PRP19.

It is found in the nucleus. Its function is as follows. Component of the spliceosome involved in mRNA processing. The polypeptide is Pre-mRNA-splicing factor URN1 (URN1) (Saccharomyces cerevisiae (strain ATCC 204508 / S288c) (Baker's yeast)).